The chain runs to 308 residues: Ornithine carbamoyltransferase (308 aa).

Carbamoyl phosphate-binding positions include 57–60, glutamine 84, arginine 108, and 135–138; these read STRT and HPCQ. L-ornithine is bound by residues asparagine 166, aspartate 224, and 228–229; that span reads SM. Carbamoyl phosphate contacts are provided by residues 264–265 and arginine 292; that span reads CL.

This sequence belongs to the aspartate/ornithine carbamoyltransferase superfamily. OTCase family.

Its subcellular location is the cytoplasm. It carries out the reaction carbamoyl phosphate + L-ornithine = L-citrulline + phosphate + H(+). It functions in the pathway amino-acid biosynthesis; L-arginine biosynthesis; L-arginine from L-ornithine and carbamoyl phosphate: step 1/3. In terms of biological role, reversibly catalyzes the transfer of the carbamoyl group from carbamoyl phosphate (CP) to the N(epsilon) atom of ornithine (ORN) to produce L-citrulline. This chain is Ornithine carbamoyltransferase, found in Ralstonia nicotianae (strain ATCC BAA-1114 / GMI1000) (Ralstonia solanacearum).